An 85-amino-acid chain; its full sequence is Polcalcin Bet v 4 (85 aa).

2 consecutive EF-hand domains span residues 7–42 (QDKA…LGSI) and 42–77 (ITPD…NRGL). The Ca(2+) site is built by aspartate 20, asparagine 22, aspartate 24, lysine 26, glutamate 31, aspartate 55, aspartate 57, aspartate 59, and glutamate 66.

Monomer.

The sequence is that of Polcalcin Bet v 4 (BETV4) from Betula pendula (European white birch).